The sequence spans 109 residues: Thioredoxin (109 aa).

Positions 2–107 (SISQVIDTSF…LLNTLQKHLK (106 aa)) constitute a Thioredoxin domain. Residues Cys31 and Cys34 each act as nucleophile in the active site. Cys31 and Cys34 are disulfide-bonded.

Belongs to the thioredoxin family.

The protein localises to the plastid. Its subcellular location is the chloroplast. Participates in various redox reactions through the reversible oxidation of its active center dithiol to a disulfide and catalyzes dithiol-disulfide exchange reactions. The sequence is that of Thioredoxin (trxA) from Griffithsia pacifica (Red alga).